The chain runs to 402 residues: uncharacterized protein (402 aa).

The signal sequence occupies residues 1–44 (MLEKNLLPEILLAIHMPLNKGLTRVKAIVIIIVVIIAVIAGVVG). A disordered region spans residues 53 to 79 (NSVTTSSSSTTTSSSLSSTSISSSTTN).

This sequence belongs to the bacterial solute-binding protein 1 family. WtpA subfamily.

This is an uncharacterized protein from Saccharolobus solfataricus (strain ATCC 35092 / DSM 1617 / JCM 11322 / P2) (Sulfolobus solfataricus).